The primary structure comprises 427 residues: N-formyl-4-amino-5-aminomethyl-2-methylpyrimidine deformylase (427 aa).

Zn(2+) is bound at residue His91. Residue Asp93 is part of the active site. Zn(2+) is bound at residue Asp124. Residue Glu158 is the Proton acceptor of the active site. Zn(2+) contacts are provided by Glu159, Asp182, and His396.

It belongs to the peptidase M20A family. It depends on Zn(2+) as a cofactor. Requires Co(2+) as cofactor.

It carries out the reaction N-formyl-4-amino-5-aminomethyl-2-methylpyrimidine + H2O = 4-amino-5-aminomethyl-2-methylpyrimidine + formate. Its pathway is cofactor biosynthesis; thiamine diphosphate biosynthesis. Catalyzes the deformylation of the formylaminopyrimidine N-formyl-4-amino-5-aminomethyl-2-methylpyrimidine (FAMP) to give the corresponding aminopyrimidine. This Halalkalibacterium halodurans (strain ATCC BAA-125 / DSM 18197 / FERM 7344 / JCM 9153 / C-125) (Bacillus halodurans) protein is N-formyl-4-amino-5-aminomethyl-2-methylpyrimidine deformylase.